A 367-amino-acid polypeptide reads, in one-letter code: tRNA(Ile)-lysidine synthase, chloroplastic (367 aa).

ATP is bound at residue 64–69 (SGGQDS).

This sequence belongs to the tRNA(Ile)-lysidine synthase family.

Its subcellular location is the plastid. The protein localises to the chloroplast. It catalyses the reaction cytidine(34) in tRNA(Ile2) + L-lysine + ATP = lysidine(34) in tRNA(Ile2) + AMP + diphosphate + H(+). In terms of biological role, ligates lysine onto the cytidine present at position 34 of the AUA codon-specific tRNA(Ile) that contains the anticodon CAU, in an ATP-dependent manner. Cytidine is converted to lysidine, thus changing the amino acid specificity of the tRNA from methionine to isoleucine. The chain is tRNA(Ile)-lysidine synthase, chloroplastic from Nephroselmis olivacea (Green alga).